We begin with the raw amino-acid sequence, 303 residues long: Probable alpha-L-glutamate ligase 1 (303 aa).

The region spanning Leu-104–Glu-287 is the ATP-grasp domain. ATP is bound by residues Lys-141, Glu-178–Phe-179, Asp-187, and Arg-211–Asn-213. Residues Asp-248, Glu-260, and Asn-262 each contribute to the Mg(2+) site. Mn(2+)-binding residues include Asp-248, Glu-260, and Asn-262.

It belongs to the RimK family. Mg(2+) is required as a cofactor. The cofactor is Mn(2+).

This chain is Probable alpha-L-glutamate ligase 1, found in Hahella chejuensis (strain KCTC 2396).